A 231-amino-acid chain; its full sequence is MAAAEMERTMSFDAAEKLKAADGGGGEVDDELEEGEIVEESNDTASYLGKEITVKHPLEHSWTFWFDNSTTKSRQTAWGSSLRNLYTFSTVEDFWGAYNNIHHPSKLIMGADFHCFKHKIEPQWEDPVCANGGTWKMSFSKGKSDTSWLYTLLAMIGHQFDHGDEICGAVVSVRAKGEKIALWTKNAANETAQVSIGKQWKQFLDYSDSVGFIFHDDAKRLDRSAKNRYTV.

EIF4G-binding stretches follow at residues 56–59 (HPLE) and 66–102 (FDNS…NNIH). MRNA contacts are provided by residues 74-79 (RQTAWG), Lys-106, and 124-125 (WE). Cys-129 and Cys-167 form a disulfide bridge. The interval 150 to 159 (YTLLAMIGHQ) is EIF4G-binding. MRNA contacts are provided by residues 174–179 (RAKGEK) and 219–223 (KRLDR).

This sequence belongs to the eukaryotic initiation factor 4E family. As to quaternary structure, EIF4F is a multi-subunit complex, the composition of which varies with external and internal environmental conditions. It is composed of at least EIF4A, EIF4E and EIF4G. EIF4E is also known to interact with other partners. In higher plants two isoforms of EIF4F have been identified, named isoform EIF4F and isoform EIF(iso)4F. Isoform EIF4F has subunits p220 and p26, whereas isoform EIF(iso)4F has subunits p82 and p28. In terms of assembly, (Microbial infection) Interacts with potyvirus viral genome-linked protein (VPg); this interaction is possible in susceptible hosts but impaired in resistant plants. In terms of processing, according to the redox status, the Cys-129-Cys-167 disulfide bridge may have a role in regulating protein function by affecting its ability to bind capped mRNA.

The protein localises to the nucleus. Its subcellular location is the cytoplasm. Functionally, component of the protein complex eIF4F, which is involved in the recognition of the mRNA cap, ATP-dependent unwinding of 5'-terminal secondary structure and recruitment of mRNA to the ribosome. Recognizes and binds the 7-methylguanosine-containing mRNA cap during an early step in the initiation of protein synthesis and facilitates ribosome binding by inducing the unwinding of the mRNAs secondary structures. Key component of recessive resistance to potyviruses. (Microbial infection) Susceptibility host factor required for viral infection (e.g. pepper mottle virus (PepMoV), potato virus Y (PVY) and tobacco etch virus (TEV)) by recruiting viral RNAs to the host ribosomal complex via an interaction with viral genome-linked protein (VPg). The polypeptide is Eukaryotic translation initiation factor 4E-1 (Solanum habrochaites (Wild tomato)).